A 226-amino-acid polypeptide reads, in one-letter code: PKHD-type hydroxylase Nwi_0701 (226 aa).

A Fe2OG dioxygenase domain is found at lysine 78 to serine 178. Fe cation-binding residues include histidine 96, aspartate 98, and histidine 159. Arginine 169 provides a ligand contact to 2-oxoglutarate.

It depends on Fe(2+) as a cofactor. The cofactor is L-ascorbate.

The sequence is that of PKHD-type hydroxylase Nwi_0701 from Nitrobacter winogradskyi (strain ATCC 25391 / DSM 10237 / CIP 104748 / NCIMB 11846 / Nb-255).